The primary structure comprises 814 residues: Glycosyltransferase GlyD (814 aa).

A GT8 domain region spans residues 1-264 (MNKTIVLAGD…SQILQHHMGE (264 aa)). Residues 8–13 (AGDRNY) and 102–103 (DS) each bind UDP. Mn(2+) contacts are provided by D102, D104, and H226. 226–232 (HFTTYRK) lines the UDP pocket. Residues 542–814 (EKPLDIIQVK…NSQIVARILN (273 aa)) are GT-D domain.

This sequence in the N-terminal section; belongs to the glycosyltransferase 8 family. The protein in the C-terminal section; belongs to the GT-D family.

Its pathway is protein modification; protein glycosylation. Its function is as follows. Involved in the polymorphic O-glycosylation of the serine-rich repeat protein PsrP. Catalyzes the third step in glycosylation PsrP in this bacteria. Transfers glucose from UDP-glucose to the terminal glucose moiety of already-glycosylated PsrP (using truncated substrates with PsrP SSR1-GlcNAc-Glc); the C-terminal GT-D domain is sufficient for this reaction in vitro. Also transfers galactose from UDP-galactose to the terminal glucose moiety of already-glycosylated PsrP; the C-terminal GT-D domain is also sufficient for this reaction in vitro. Activity is much higher with UDP-glucose, and the enzyme has a very marked preference for PsrP substrate that has already been modified by GlcNAc and glucose. In vitro has hydrolytic activity against UDP-galactose and to a lesser extent against UDP-glucose. In terms of biological role, also catalyzes the fourth step in glycosylation of PsrP in this bacteria. Can transfer the sugar from both UDP-glucose and UDP-galactose to the terminal sugar moiety of PsrP-GlcNAc-Glc-Glc and PsrP-GlcNAc-Glc-Gal; the C-terminal GT-D domain is also sufficient for this reaction in vitro (using truncated substrates with glycosylated PsrP SSR1). The N-terminal GT-D domain can transfer galactose from UDP-galactose to PsrP-GlcNAc-Glc-Gal or PsrP-GlcNAc-Glc-Glc in the fourth step. This chain is Glycosyltransferase GlyD, found in Streptococcus pneumoniae serotype 4 (strain ATCC BAA-334 / TIGR4).